We begin with the raw amino-acid sequence, 162 residues long: MHYITPDLCDAYPELVQVVEPMFANYGGRDSFGGQMVTIKCHEDNSLVKEQVDLPGEGRVLVVDGGGSLRRALLGDMLAEKAAKNGWAGIVVYGCIRDVDVIAQADLGVQALASHPMKTDKRGIGDLNVPVTFGGVTFKPGEYLYADNNGIIVSPQALSMPE.

Substrate is bound by residues 75–78 (GDML) and Arg-97. Asp-98 is a binding site for a divalent metal cation.

This sequence belongs to the class II aldolase/RraA-like family. As to quaternary structure, homotrimer. The cofactor is a divalent metal cation.

It carries out the reaction 4-hydroxy-4-methyl-2-oxoglutarate = 2 pyruvate. The catalysed reaction is oxaloacetate + H(+) = pyruvate + CO2. In terms of biological role, catalyzes the aldol cleavage of 4-hydroxy-4-methyl-2-oxoglutarate (HMG) into 2 molecules of pyruvate. Also contains a secondary oxaloacetate (OAA) decarboxylase activity due to the common pyruvate enolate transition state formed following C-C bond cleavage in the retro-aldol and decarboxylation reactions. The sequence is that of Putative 4-hydroxy-4-methyl-2-oxoglutarate aldolase from Ectopseudomonas mendocina (strain ymp) (Pseudomonas mendocina).